A 561-amino-acid chain; its full sequence is MRGSNNTDLFDPKTEMDSNFSRHGSSSEGDFGFAFNDSNFSDRLLRIEILGGPSDSRSDAEGCTSIADWARHRKRRREDNKKDNGVAISDIVACAEEQILTDNNQPDMDDAPGGDNLDDEGEAMVEEALSGDDDASSEPNWGIDCSTVVRVKELHISSPILAAKSPFFYKLFSNGMRESEQRHVTLRISAQEEGALMELLNFMYSNSLSVTTAPALLDVLMAADKFEVASCMRYCSRLLRNMPMTPDSALLYLELPSSVLMAEAVQPLTDAAKQFLASRYKDITKFHDEVMALPLAGIEAILSSDDLQIASEDAVYDFVLKWARGQYSSLEDRREILGSRLALYIRFPYMTCRKLKKVLTCSDFEHEVASKQVLEALFFKAEAPHRQRILAAEGSDSMNRRFIERAYKYRPVKVVEFELPRPQCVVYLDLKREECAGLFPSGRVYSQAFHLGGQGFFLSAHCNMDQQSSFHCFGLFLGMQEKGAVSFGVDYEFAARDKSTKEEYVSKYKGNYTFTGGKAVGYRNLFGIPWTSFIAEDSQHFINGILHLRAELTIKRSSDLH.

Disordered stretches follow at residues 1–31 (MRGS…EGDF) and 100–119 (LTDN…NLDD). Over residues 17–28 (DSNFSRHGSSSE) the composition is skewed to polar residues. Over residues 107-119 (DMDDAPGGDNLDD) the composition is skewed to acidic residues. Residues 143–212 (IDCSTVVRVK…MYSNSLSVTT (70 aa)) enclose the BTB domain. A BACK domain is found at 266 to 358 (QPLTDAAKQF…YMTCRKLKKV (93 aa)).

It participates in protein modification; protein ubiquitination. Functionally, may act as a substrate-specific adapter of an E3 ubiquitin-protein ligase complex (CUL3-RBX1-BTB) which mediates the ubiquitination and subsequent proteasomal degradation of target proteins. The protein is BTB/POZ domain-containing protein At2g46260 of Arabidopsis thaliana (Mouse-ear cress).